A 485-amino-acid chain; its full sequence is Glutamyl-tRNA(Gln) amidotransferase subunit A (485 aa).

Catalysis depends on charge relay system residues lysine 75 and serine 150. Serine 174 (acyl-ester intermediate) is an active-site residue.

Belongs to the amidase family. GatA subfamily. Heterotrimer of A, B and C subunits.

It carries out the reaction L-glutamyl-tRNA(Gln) + L-glutamine + ATP + H2O = L-glutaminyl-tRNA(Gln) + L-glutamate + ADP + phosphate + H(+). Allows the formation of correctly charged Gln-tRNA(Gln) through the transamidation of misacylated Glu-tRNA(Gln) in organisms which lack glutaminyl-tRNA synthetase. The reaction takes place in the presence of glutamine and ATP through an activated gamma-phospho-Glu-tRNA(Gln). The polypeptide is Glutamyl-tRNA(Gln) amidotransferase subunit A (Trichodesmium erythraeum (strain IMS101)).